The primary structure comprises 128 residues: CD59 glycoprotein (128 aa).

Positions 1–25 (MGIQGGSVLFGLLLVLAVFCHSGHS) are cleaved as a signal peptide. The region spanning 26–108 (LQCYNCPNPT…QLENGGTSLS (83 aa)) is the UPAR/Ly6 domain. Cystine bridges form between C28–C51, C31–C38, C44–C64, C70–C88, and C89–C94. N-linked (GlcNAc...) asparagine glycosylation occurs at N43. N102 carries the GPI-anchor amidated asparagine lipid modification. A propeptide spans 103–128 (GGTSLSEKTVVLLVTLLLAAAWCLHP) (removed in mature form).

As to quaternary structure, interacts with T-cell surface antigen CD2. In terms of processing, N- and O-glycosylated.

The protein resides in the cell membrane. The protein localises to the secreted. Potent inhibitor of the complement membrane attack complex (MAC) action, which protects self-cells from damage during complement activation. Acts by binding to the beta-haipins of C8 (C8A and C8B) components of the assembling MAC, forming an intermolecular beta-sheet that prevents incorporation of the multiple copies of C9 required for complete formation of the osmolytic pore. The chain is CD59 glycoprotein from Chlorocebus aethiops (Green monkey).